The primary structure comprises 450 residues: Keratin, type I cytoskeletal 25 (450 aa).

Over residues 1–23 the composition is skewed to low complexity; it reads MSLRLSSASRRSCPRPTTGSLRL. Positions 1–26 are disordered; it reads MSLRLSSASRRSCPRPTTGSLRLSGG. A head region spans residues 1 to 78; the sequence is MSLRLSSASR…VNERGLLSGN (78 aa). Positions 79 to 114 are coil 1A; it reads EKVTMQNLNDRLASYLDSVHALEEANADLEQKIKGW. Positions 79-394 constitute an IF rod domain; it reads EKVTMQNLND…LLIGGDDGAC (316 aa). Residues 115-136 are linker 1; the sequence is YEKFGPGSCRGLDHDYSRYFPI. Residues 137–228 are coil 1B; that stretch reads IDDLKNQIIA…KNHKEEMQVL (92 aa). A linker 12 region spans residues 229–251; that stretch reads QCAAGGNVNVEMNAAPGVDLTVL. Residues 252–390 form a coil 2 region; it reads LNNMRAEYEA…ETYCLLIGGD (139 aa). The tail stretch occupies residues 391-450; it reads DGACKSGGYKSKDYGSGNVGSQVKDSAKAIVVKKVLEEVDQRSKILTTRLRSLEEKSQSN. Residue Ser442 is modified to Phosphoserine.

This sequence belongs to the intermediate filament family. Heterodimer of a type I and a type II keratin. Heterodimer with type II keratin KRT5 leading to the formation of keratin intermediate filament (KIF) network. Interacts with KRT6A to form filaments.

The protein localises to the cytoplasm. Functionally, essential for the proper assembly of type I and type II keratin protein complexes and formation of keratin intermediate filaments in the inner root sheath (irs). Plays a role in the cytoskeleton organization. This chain is Keratin, type I cytoskeletal 25 (KRT25), found in Pan troglodytes (Chimpanzee).